The primary structure comprises 1068 residues: Disheveled-associated activator of morphogenesis 2 (1068 aa).

The 377-residue stretch at 40-416 (SPIPNAEELN…QIVLQDERGV (377 aa)) folds into the GBD/FH3 domain. A coiled-coil region spans residues 434–516 (MLINENEVKQ…LVAQLSELST (83 aa)). The segment at 514–586 (LSTGPVSSPP…MGLPLPQDPY (73 aa)) is disordered. The FH1 domain maps to 518–594 (PVSSPPPPGG…PYPSSDVPLR (77 aa)). Positions 540–572 (LPPPPPPLPFACCPPPPPPPLPPGGPPTPPGAP) are enriched in pro residues. In terms of domain architecture, FH2 spans 595–994 (KKRVPQPSHP…EERRARMEAM (400 aa)). Serine 1015 carries the post-translational modification Phosphoserine. The DAD domain occupies 1016–1048 (SLEEGGEFDDLVSALRSGEVFDKDLCKLKRSRK).

The protein belongs to the formin homology family. In terms of assembly, interacts with DVL3. Interacts with INF2. Expressed in most tissues examined. Expressed in kidney glomeruli.

Its function is as follows. Key regulator of the Wnt signaling pathway, which is required for various processes during development, such as dorsal patterning, determination of left/right symmetry or myelination in the central nervous system. Acts downstream of Wnt ligands and upstream of beta-catenin (CTNNB1). Required for canonical Wnt signaling pathway during patterning in the dorsal spinal cord by promoting the aggregation of Disheveled (Dvl) complexes, thereby clustering and formation of Wnt receptor signalosomes and potentiating Wnt activity. During dorsal patterning of the spinal cord, inhibits oligodendrocytes differentiation via interaction with PIP5K1A. Also regulates non-canonical Wnt signaling pathway. Acts downstream of PITX2 in the developing gut and is required for left/right asymmetry within dorsal mesentery: affects mesenchymal condensation by lengthening cadherin-based junctions through WNT5A and non-canonical Wnt signaling, inducing polarized condensation in the left dorsal mesentery necessary to initiate gut rotation. Together with DAAM1, required for myocardial maturation and sarcomere assembly. Is a regulator of actin nucleation and elongation, filopodia formation and podocyte migration. This Homo sapiens (Human) protein is Disheveled-associated activator of morphogenesis 2.